Reading from the N-terminus, the 248-residue chain is tRNA pseudouridine synthase A (248 aa).

Asp-53 acts as the Nucleophile in catalysis. Tyr-111 provides a ligand contact to substrate.

Belongs to the tRNA pseudouridine synthase TruA family. In terms of assembly, homodimer.

It catalyses the reaction uridine(38/39/40) in tRNA = pseudouridine(38/39/40) in tRNA. Functionally, formation of pseudouridine at positions 38, 39 and 40 in the anticodon stem and loop of transfer RNAs. The chain is tRNA pseudouridine synthase A from Listeria monocytogenes serovar 1/2a (strain ATCC BAA-679 / EGD-e).